Reading from the N-terminus, the 155-residue chain is NADPH-dependent 7-cyano-7-deazaguanine reductase (155 aa).

The active-site Thioimide intermediate is cysteine 53. Catalysis depends on aspartate 60, which acts as the Proton donor. Substrate-binding positions include 75–77 (VES) and 94–95 (HE).

It belongs to the GTP cyclohydrolase I family. QueF type 1 subfamily.

It is found in the cytoplasm. It catalyses the reaction 7-aminomethyl-7-carbaguanine + 2 NADP(+) = 7-cyano-7-deazaguanine + 2 NADPH + 3 H(+). Its pathway is tRNA modification; tRNA-queuosine biosynthesis. Functionally, catalyzes the NADPH-dependent reduction of 7-cyano-7-deazaguanine (preQ0) to 7-aminomethyl-7-deazaguanine (preQ1). This Hyphomonas neptunium (strain ATCC 15444) protein is NADPH-dependent 7-cyano-7-deazaguanine reductase.